The following is a 209-amino-acid chain: Uridine kinase (209 aa).

12 to 19 (GGSGSGKT) is a binding site for ATP.

It belongs to the uridine kinase family.

The protein resides in the cytoplasm. The enzyme catalyses uridine + ATP = UMP + ADP + H(+). It carries out the reaction cytidine + ATP = CMP + ADP + H(+). The protein operates within pyrimidine metabolism; CTP biosynthesis via salvage pathway; CTP from cytidine: step 1/3. It participates in pyrimidine metabolism; UMP biosynthesis via salvage pathway; UMP from uridine: step 1/1. The chain is Uridine kinase from Listeria innocua serovar 6a (strain ATCC BAA-680 / CLIP 11262).